A 282-amino-acid polypeptide reads, in one-letter code: Pantothenate synthetase (282 aa).

Residue 30-37 (MGNLHQGH) coordinates ATP. H37 acts as the Proton donor in catalysis. Q61 contacts (R)-pantoate. Residue Q61 coordinates beta-alanine. 149 to 152 (GKKD) is an ATP binding site. Residue Q155 coordinates (R)-pantoate. ATP is bound by residues I178 and 186–189 (MSSR).

It belongs to the pantothenate synthetase family. Homodimer.

The protein localises to the cytoplasm. It catalyses the reaction (R)-pantoate + beta-alanine + ATP = (R)-pantothenate + AMP + diphosphate + H(+). It functions in the pathway cofactor biosynthesis; (R)-pantothenate biosynthesis; (R)-pantothenate from (R)-pantoate and beta-alanine: step 1/1. In terms of biological role, catalyzes the condensation of pantoate with beta-alanine in an ATP-dependent reaction via a pantoyl-adenylate intermediate. The chain is Pantothenate synthetase from Shewanella loihica (strain ATCC BAA-1088 / PV-4).